The following is a 138-amino-acid chain: Basic leucine zipper 8 (138 aa).

The disordered stretch occupies residues 30–67 (NLPATSDDSSRTAEDNERKRRRKVSNRESARRSRMRKQ). Basic and acidic residues predominate over residues 37–47 (DSSRTAEDNER). Residues 45 to 108 (NERKRRRKVS…EKVIEENMKL (64 aa)) enclose the bZIP domain. Residues 47–68 (RKRRRKVSNRESARRSRMRKQR) form a basic motif region. A Nuclear localization signal motif is present at residues 48-55 (KRRRKVSN). The interval 73–87 (LWSMLVQLINKNKSL) is leucine-zipper.

It belongs to the bZIP family. As to quaternary structure, homodimer.

It localises to the nucleus. In Arabidopsis thaliana (Mouse-ear cress), this protein is Basic leucine zipper 8.